Here is a 297-residue protein sequence, read N- to C-terminus: D-alanine--D-alanine ligase (297 aa).

In terms of domain architecture, ATP-grasp spans 95 to 294 (KMLWKAFGLP…FEQLVVKILE (200 aa)). Residue 125-180 (VAKLGLPLMVKPSLEGSSVGLTKVKAVEELKSAVEYALKFDNTILIEEWLAGDELT) coordinates ATP. 3 residues coordinate Mg(2+): Asp248, Glu261, and Asn263.

It belongs to the D-alanine--D-alanine ligase family. Mg(2+) serves as cofactor. Mn(2+) is required as a cofactor.

It is found in the cytoplasm. It carries out the reaction 2 D-alanine + ATP = D-alanyl-D-alanine + ADP + phosphate + H(+). It functions in the pathway cell wall biogenesis; peptidoglycan biosynthesis. Functionally, cell wall formation. The protein is D-alanine--D-alanine ligase of Haemophilus influenzae (strain PittEE).